The following is a 206-amino-acid chain: Adenine phosphoribosyltransferase (206 aa).

The protein belongs to the purine/pyrimidine phosphoribosyltransferase family. In terms of assembly, homodimer.

It localises to the cytoplasm. It catalyses the reaction AMP + diphosphate = 5-phospho-alpha-D-ribose 1-diphosphate + adenine. Its pathway is purine metabolism; AMP biosynthesis via salvage pathway; AMP from adenine: step 1/1. Functionally, catalyzes a salvage reaction resulting in the formation of AMP, that is energically less costly than de novo synthesis. The polypeptide is Adenine phosphoribosyltransferase (Rhodopirellula baltica (strain DSM 10527 / NCIMB 13988 / SH1)).